A 282-amino-acid polypeptide reads, in one-letter code: MMVHAHPDDESIVTGATLAKYAAEGAGVTLVTCTLGEEGEVIPDDLAHLTSDREGTLGEHRIGELDKACLALGVRDHRFLGGPGRYRDSGMMGAPTNEHPRAFWGADVEEAATLLAQVIREVRPHVLVSYDEHGGYGHPDHIQAHRVARRAFLRAGERAMPGTPWQVRKLYAIAQPVSRIEESIARLREESGSFTPPARVSDIARGTPETAVTTRVDATDHWAAKALAMRAHATQITVEGERFALSNDIAQEIDAVEYFTLLVGPTPRIQHGEYETDLFAGL.

Residues His-6, Asp-9, and His-141 each contribute to the Zn(2+) site.

The protein belongs to the MshB deacetylase family. Zn(2+) serves as cofactor.

The catalysed reaction is 1D-myo-inositol 2-acetamido-2-deoxy-alpha-D-glucopyranoside + H2O = 1D-myo-inositol 2-amino-2-deoxy-alpha-D-glucopyranoside + acetate. Its function is as follows. Catalyzes the deacetylation of 1D-myo-inositol 2-acetamido-2-deoxy-alpha-D-glucopyranoside (GlcNAc-Ins) in the mycothiol biosynthesis pathway. The chain is 1D-myo-inositol 2-acetamido-2-deoxy-alpha-D-glucopyranoside deacetylase from Nocardiopsis dassonvillei (strain ATCC 23218 / DSM 43111 / CIP 107115 / JCM 7437 / KCTC 9190 / NBRC 14626 / NCTC 10488 / NRRL B-5397 / IMRU 509) (Actinomadura dassonvillei).